Consider the following 372-residue polypeptide: Fatty acid 2-hydroxylase (372 aa).

Residues 8 to 86 enclose the Cytochrome b5 heme-binding domain; that stretch reads AASFSPSEVQ…LEQYYVGELR (79 aa). 2 residues coordinate heme: His43 and His69. A run of 2 helical transmembrane segments spans residues 168–188 and 213–233; these read VWYS…WSYY and SMFP…EYLI. The Fatty acid hydroxylase domain occupies 219-361; the sequence is FMLGTFLWSL…TKLWDYCFHT (143 aa). Zn(2+) contacts are provided by His234, His239, His257, His260, and His261. 2 consecutive transmembrane segments (helical) span residues 268–288 and 290–310; these read SRLV…YLCM and LILP…GYVL. Zn(2+) is bound by residues His315, His319, His336, His339, and His340.

Belongs to the sterol desaturase family. SCS7 subfamily. It depends on Zn(2+) as a cofactor. Detected in differentiating cultured keratinocytes (at protein level). Detected in epidermis and cultured keratinocytes. Highly expressed in brain and colon. Detected at lower levels in testis, prostate, pancreas and kidney.

Its subcellular location is the endoplasmic reticulum membrane. It is found in the microsome membrane. It carries out the reaction a 1,2-saturated fatty acid + 2 Fe(II)-[cytochrome b5] + O2 + 2 H(+) = a (R)-2-hydroxy fatty acid + 2 Fe(III)-[cytochrome b5] + H2O. It catalyses the reaction hexadecanoate + 2 Fe(II)-[cytochrome b5] + O2 + 2 H(+) = (R)-2-hydroxyhexadecanoate + 2 Fe(III)-[cytochrome b5] + H2O. The enzyme catalyses octadecanoate + 2 Fe(II)-[cytochrome b5] + O2 + 2 H(+) = (R)-2-hydroxyoctadecanoate + 2 Fe(III)-[cytochrome b5] + H2O. The catalysed reaction is docosanoate + 2 Fe(II)-[cytochrome b5] + O2 + 2 H(+) = 2-hydroxydocosanoate + 2 Fe(III)-[cytochrome b5] + H2O. It carries out the reaction tetracosanoate + 2 Fe(II)-[cytochrome b5] + O2 + 2 H(+) = (R)-2-hydroxytetracosanoate + 2 Fe(III)-[cytochrome b5] + H2O. Its pathway is lipid metabolism; fatty acid metabolism. The protein operates within sphingolipid metabolism; galactosylceramide biosynthesis. Catalyzes the hydroxylation of free fatty acids at the C-2 position to produce 2-hydroxy fatty acids, which are building blocks of sphingolipids and glycosphingolipids common in neural tissue and epidermis. FA2H is stereospecific for the production of (R)-2-hydroxy fatty acids. Plays an essential role in the synthesis of galactosphingolipids of the myelin sheath. Responsible for the synthesis of sphingolipids and glycosphingolipids involved in the formation of epidermal lamellar bodies critical for skin permeability barrier. Participates in the synthesis of glycosphingolipids and a fraction of type II wax diesters in sebaceous gland, specifically regulating hair follicle homeostasis. Involved in the synthesis of sphingolipids of plasma membrane rafts, controlling lipid raft mobility and trafficking of raft-associated proteins. In Homo sapiens (Human), this protein is Fatty acid 2-hydroxylase.